The following is a 149-amino-acid chain: CyanoQ (149 aa).

The N-terminal stretch at 1 to 21 (MSRLRSLLSLILVLVTTVLVS) is a signal peptide. The N-palmitoyl cysteine moiety is linked to residue Cys-22. The S-diacylglycerol cysteine moiety is linked to residue Cys-22.

It belongs to the PsbQ family. CyanoQ subfamily. In terms of assembly, PSII is composed of 1 copy each of membrane proteins PsbA, PsbB, PsbC, PsbD, PsbE, PsbF, PsbH, PsbI, PsbJ, PsbK, PsbL, PsbM, PsbT, PsbX, PsbY, PsbZ, Psb30/Ycf12, peripheral proteins PsbO, CyanoQ (PsbQ), PsbU, PsbV and a large number of cofactors. It forms dimeric complexes. Pull-down experiments with His-tagged PsbQ pull down dimeric, but not monomeric, PSII. Post-translationally, the N-terminus is blocked. Upon expression in E.coli the N-terminus is modified with a diacylglycerol and an acyl group bound to two palmitates and one palmitoleate.

It localises to the cellular thylakoid membrane. One of the extrinsic, lumenal subunits of photosystem II (PSII), which stabilize and protect the oxygen-evolving complex. PSII is a light-driven water plastoquinone oxidoreductase, using light energy to abstract electrons from H(2)O, generating a proton gradient subsequently used for ATP formation. Plays a role in the stability of the oxygen-evolving center on the luminal side of PSII. Required for optimal photoautotrophic growth in the absence of Ca(2+) or Cl(-), functions in optimizing PSII water oxidation/O(2) evolving activity. Requires PsbO to bind to PSII. This chain is CyanoQ, found in Synechocystis sp. (strain ATCC 27184 / PCC 6803 / Kazusa).